A 718-amino-acid polypeptide reads, in one-letter code: Catalase-peroxidase (718 aa).

Positions 98–219 (WHAAGTYRMG…LAATEMGLIY (122 aa)) form a cross-link, tryptophyl-tyrosyl-methioninium (Trp-Tyr) (with M-245). The active-site Proton acceptor is the histidine 99. A cross-link (tryptophyl-tyrosyl-methioninium (Tyr-Met) (with W-98)) is located at residues 219–245 (YVNPEGPQASGDPRSAAPFIRATFGNM). Heme b is bound at residue histidine 260.

This sequence belongs to the peroxidase family. Peroxidase/catalase subfamily. Homodimer or homotetramer. Requires heme b as cofactor. Formation of the three residue Trp-Tyr-Met cross-link is important for the catalase, but not the peroxidase activity of the enzyme.

The catalysed reaction is H2O2 + AH2 = A + 2 H2O. It catalyses the reaction 2 H2O2 = O2 + 2 H2O. Bifunctional enzyme with both catalase and broad-spectrum peroxidase activity. This chain is Catalase-peroxidase, found in Acinetobacter baumannii (strain ACICU).